A 269-amino-acid chain; its full sequence is Phosphate import ATP-binding protein PstB (269 aa).

Residues 14-253 (LTLEDVSISY…EFDSTKKIFS (240 aa)) form the ABC transporter domain. 46–53 (GPSGCGKS) provides a ligand contact to ATP.

Belongs to the ABC transporter superfamily. Phosphate importer (TC 3.A.1.7) family. In terms of assembly, the complex is composed of two ATP-binding proteins (PstB), two transmembrane proteins (PstC and PstA) and a solute-binding protein (PstS).

The protein resides in the cell inner membrane. It carries out the reaction phosphate(out) + ATP + H2O = ADP + 2 phosphate(in) + H(+). In terms of biological role, part of the ABC transporter complex PstSACB involved in phosphate import. Responsible for energy coupling to the transport system. The protein is Phosphate import ATP-binding protein PstB of Prochlorococcus marinus subsp. pastoris (strain CCMP1986 / NIES-2087 / MED4).